A 182-amino-acid polypeptide reads, in one-letter code: Protein transport protein gos1 (182 aa).

Topologically, residues 1-163 are cytoplasmic; it reads MKSMLLRDSV…RKTSIRRRRD (163 aa). The chain crosses the membrane as a helical; Anchor for type IV membrane protein span at residues 164–181; sequence SIILALLISVLMLLFLFF. H182 is a topological domain (vesicular).

Belongs to the GOSR1 family. As to quaternary structure, component of a SNARE complex consisting of sed5, gos1, ykt6, and sft1.

It localises to the golgi apparatus membrane. In terms of biological role, nonessential SNARE involved in retrograde transport within the Golgi complex. The polypeptide is Protein transport protein gos1 (gos1) (Schizosaccharomyces pombe (strain 972 / ATCC 24843) (Fission yeast)).